A 544-amino-acid polypeptide reads, in one-letter code: CTP synthase (544 aa).

The interval 1 to 267 (MTKFVFVTGG…AQRVLEILNL (267 aa)) is amidoligase domain. A CTP-binding site is contributed by serine 13. Serine 13 contacts UTP. ATP is bound at residue 14–19 (SIGKGI). Position 54 (tyrosine 54) interacts with L-glutamine. Aspartate 71 serves as a coordination point for ATP. Aspartate 71 and glutamate 141 together coordinate Mg(2+). CTP is bound by residues 148–150 (DIE), 188–193 (KTKPTQ), and lysine 224. Residues 188 to 193 (KTKPTQ) and lysine 224 each bind UTP. Residues 292–534 (EIAIVGKYVR…IEAALRSRPQ (243 aa)) enclose the Glutamine amidotransferase type-1 domain. An L-glutamine-binding site is contributed by glycine 354. The active-site Nucleophile; for glutamine hydrolysis is cysteine 381. Residues 382–385 (LGMQ), glutamate 405, and arginine 462 each bind L-glutamine. Active-site residues include histidine 507 and glutamate 509.

It belongs to the CTP synthase family. In terms of assembly, homotetramer.

It catalyses the reaction UTP + L-glutamine + ATP + H2O = CTP + L-glutamate + ADP + phosphate + 2 H(+). It carries out the reaction L-glutamine + H2O = L-glutamate + NH4(+). The catalysed reaction is UTP + NH4(+) + ATP = CTP + ADP + phosphate + 2 H(+). The protein operates within pyrimidine metabolism; CTP biosynthesis via de novo pathway; CTP from UDP: step 2/2. Its activity is regulated as follows. Allosterically activated by GTP, when glutamine is the substrate; GTP has no effect on the reaction when ammonia is the substrate. The allosteric effector GTP functions by stabilizing the protein conformation that binds the tetrahedral intermediate(s) formed during glutamine hydrolysis. Inhibited by the product CTP, via allosteric rather than competitive inhibition. In terms of biological role, catalyzes the ATP-dependent amination of UTP to CTP with either L-glutamine or ammonia as the source of nitrogen. Regulates intracellular CTP levels through interactions with the four ribonucleotide triphosphates. In Synechococcus sp. (strain JA-2-3B'a(2-13)) (Cyanobacteria bacterium Yellowstone B-Prime), this protein is CTP synthase.